Reading from the N-terminus, the 128-residue chain is Glycine cleavage system H protein (128 aa).

The Lipoyl-binding domain occupies 25–107; it reads TITVGITHHA…YGAGWFFKIK (83 aa). Residue Lys-66 is modified to N6-lipoyllysine.

It belongs to the GcvH family. The glycine cleavage system is composed of four proteins: P, T, L and H. It depends on (R)-lipoate as a cofactor.

The glycine cleavage system catalyzes the degradation of glycine. The H protein shuttles the methylamine group of glycine from the P protein to the T protein. This is Glycine cleavage system H protein from Neisseria meningitidis serogroup C (strain 053442).